A 500-amino-acid chain; its full sequence is Lysine--tRNA ligase (500 aa).

Residues Glu410 and Glu417 each coordinate Mg(2+).

It belongs to the class-II aminoacyl-tRNA synthetase family. As to quaternary structure, homodimer. Requires Mg(2+) as cofactor.

It is found in the cytoplasm. The enzyme catalyses tRNA(Lys) + L-lysine + ATP = L-lysyl-tRNA(Lys) + AMP + diphosphate. The protein is Lysine--tRNA ligase of Shewanella loihica (strain ATCC BAA-1088 / PV-4).